Consider the following 126-residue polypeptide: Holo-[acyl-carrier-protein] synthase (126 aa).

Residues Asp8 and Glu59 each coordinate Mg(2+).

Belongs to the P-Pant transferase superfamily. AcpS family. Requires Mg(2+) as cofactor.

It localises to the cytoplasm. The catalysed reaction is apo-[ACP] + CoA = holo-[ACP] + adenosine 3',5'-bisphosphate + H(+). Transfers the 4'-phosphopantetheine moiety from coenzyme A to a Ser of acyl-carrier-protein. The polypeptide is Holo-[acyl-carrier-protein] synthase (Rickettsia prowazekii (strain Madrid E)).